The chain runs to 293 residues: Ribosomal protein L11 methyltransferase (293 aa).

4 residues coordinate S-adenosyl-L-methionine: T145, G166, D188, and N230.

Belongs to the methyltransferase superfamily. PrmA family.

Its subcellular location is the cytoplasm. The enzyme catalyses L-lysyl-[protein] + 3 S-adenosyl-L-methionine = N(6),N(6),N(6)-trimethyl-L-lysyl-[protein] + 3 S-adenosyl-L-homocysteine + 3 H(+). Methylates ribosomal protein L11. The chain is Ribosomal protein L11 methyltransferase from Salmonella arizonae (strain ATCC BAA-731 / CDC346-86 / RSK2980).